Here is a 388-residue protein sequence, read N- to C-terminus: Chorismate synthase (388 aa).

NADP(+)-binding residues include arginine 39 and arginine 45. FMN contacts are provided by residues 130–132 (RSS), 251–252 (NA), glycine 296, 311–315 (KPIPT), and arginine 337.

This sequence belongs to the chorismate synthase family. Homotetramer. The cofactor is FMNH2.

It carries out the reaction 5-O-(1-carboxyvinyl)-3-phosphoshikimate = chorismate + phosphate. It functions in the pathway metabolic intermediate biosynthesis; chorismate biosynthesis; chorismate from D-erythrose 4-phosphate and phosphoenolpyruvate: step 7/7. In terms of biological role, catalyzes the anti-1,4-elimination of the C-3 phosphate and the C-6 proR hydrogen from 5-enolpyruvylshikimate-3-phosphate (EPSP) to yield chorismate, which is the branch point compound that serves as the starting substrate for the three terminal pathways of aromatic amino acid biosynthesis. This reaction introduces a second double bond into the aromatic ring system. The sequence is that of Chorismate synthase from Streptococcus suis (strain 98HAH33).